The chain runs to 385 residues: Aldehyde dehydrogenase family 3 member B2 (385 aa).

Residue 107-112 participates in NAD(+) binding; that stretch reads GSPRVG. Catalysis depends on residues Glu-129 and Cys-163. Cys-382 is subject to Cysteine methyl ester. Cys-382 carries the S-geranylgeranyl cysteine lipid modification. Residues 383–385 constitute a propeptide, removed in mature form; it reads TLL.

This sequence belongs to the aldehyde dehydrogenase family. In terms of processing, geranylgeranylation is important for localization to lipid droplets and enzyme activity. As to expression, salivary gland. Expressed at protein level in placenta.

Its subcellular location is the lipid droplet. The enzyme catalyses an aldehyde + NAD(+) + H2O = a carboxylate + NADH + 2 H(+). It carries out the reaction a long-chain fatty aldehyde + NAD(+) + H2O = a long-chain fatty acid + NADH + 2 H(+). The catalysed reaction is a medium-chain fatty aldehyde + NAD(+) + H2O = a medium-chain fatty acid + NADH + 2 H(+). It catalyses the reaction hexadecanoate + NADH + 2 H(+) = hexadecanal + NAD(+) + H2O. The enzyme catalyses octanal + NAD(+) + H2O = octanoate + NADH + 2 H(+). Its pathway is alcohol metabolism; ethanol degradation; acetate from ethanol: step 2/2. Its function is as follows. Oxidizes medium and long chain fatty aldehydes in lipid droplets into non-toxic fatty acids. The polypeptide is Aldehyde dehydrogenase family 3 member B2 (ALDH3B2) (Homo sapiens (Human)).